Here is a 228-residue protein sequence, read N- to C-terminus: Putative adhesin A1I_01215 (228 aa).

The N-terminal stretch at 1-22 is a signal peptide; that stretch reads MKKLLLIAATSATVLSSALSFA.

The polypeptide is Putative adhesin A1I_01215 (Rickettsia bellii (strain OSU 85-389)).